Consider the following 330-residue polypeptide: Biotin synthase (330 aa).

A Radical SAM core domain is found at 53-276 (NNIRLNVLLS…VFPFKELRLS (224 aa)). Positions 68, 72, and 75 each coordinate [4Fe-4S] cluster. Positions 112, 144, 204, and 274 each coordinate [2Fe-2S] cluster.

It belongs to the radical SAM superfamily. Biotin synthase family. As to quaternary structure, homodimer. [4Fe-4S] cluster serves as cofactor. [2Fe-2S] cluster is required as a cofactor.

It catalyses the reaction (4R,5S)-dethiobiotin + (sulfur carrier)-SH + 2 reduced [2Fe-2S]-[ferredoxin] + 2 S-adenosyl-L-methionine = (sulfur carrier)-H + biotin + 2 5'-deoxyadenosine + 2 L-methionine + 2 oxidized [2Fe-2S]-[ferredoxin]. The protein operates within cofactor biosynthesis; biotin biosynthesis; biotin from 7,8-diaminononanoate: step 2/2. In terms of biological role, catalyzes the conversion of dethiobiotin (DTB) to biotin by the insertion of a sulfur atom into dethiobiotin via a radical-based mechanism. This Streptococcus agalactiae serotype III (strain NEM316) protein is Biotin synthase.